The chain runs to 275 residues: Arylalkylamine N-acetyltransferase 1 (275 aa).

Residues 181–183 (LSV) and 189–193 (GLGIA) each bind acetyl-CoA. Residues 181 to 254 (LSVDTNYRGL…GEVVFKPAAP (74 aa)) enclose the N-acetyltransferase domain.

It belongs to the acetyltransferase family. AANAT subfamily. As to expression, in the adult, expressed in the midgut portion of the thoracic segments and the frontal half of the abdomen (at protein level). Expressed in the epithelial cell layer facing the lumen of the gut (at protein level). In the brain, expressed in a sub-populations of neurons and astrocytes, and in a set of distinct stripes in the optic lobes (at protein level). Expressed mainly in serotonergic neurons but also in subsets of glutamatergic, GABAergic and cholinergic neurons (at protein level).

The protein resides in the cytoplasm. It localises to the nucleus. It carries out the reaction a 2-arylethylamine + acetyl-CoA = an N-acetyl-2-arylethylamine + CoA + H(+). The catalysed reaction is serotonin + acetyl-CoA = N-acetylserotonin + CoA + H(+). The enzyme catalyses dopamine + acetyl-CoA = N-acetyldopamine + CoA + H(+). It catalyses the reaction tyramine + acetyl-CoA = N-acetyltyramine + CoA + H(+). It carries out the reaction octopamine + acetyl-CoA = N-acetyloctopamine + CoA + H(+). The catalysed reaction is 5-methoxytryptamine + acetyl-CoA = melatonin + CoA + H(+). The enzyme catalyses 2-phenylethylamine + acetyl-CoA = N-(2-phenylethyl)acetamide + CoA + H(+). It catalyses the reaction noradrenaline + acetyl-CoA = N-acetylnoradrenaline + CoA + H(+). It carries out the reaction tyramine + butanoyl-CoA = N-butanoyltyramine + CoA + H(+). The catalysed reaction is tyramine + hexanoyl-CoA = N-hexanoyltyramine + CoA + H(+). The enzyme catalyses tryptamine + acetyl-CoA = N-acetyltryptamine + CoA + H(+). It catalyses the reaction dopamine + hexadecanoyl-CoA = N-hexadecanoyl-dopamine + CoA + H(+). It carries out the reaction dopamine + (9Z)-octadecenoyl-CoA = N-(9Z-octadecanoyl)-dopamine + CoA + H(+). The catalysed reaction is serotonin + hexadecanoyl-CoA = N-hexadecanoyl-serotonin + CoA + H(+). The enzyme catalyses serotonin + (9Z)-octadecenoyl-CoA = N-(9Z-octadecenoyl)-serotonin + CoA + H(+). It catalyses the reaction serotonin + octadecanoyl-CoA = N-octadecanoyl-serotonin + CoA + H(+). It carries out the reaction serotonin + (5Z,8Z,11Z,14Z)-eicosatetraenoyl-CoA = N-[(5Z,8Z,11Z,14Z)-eicosatetraenoyl]-serotonin + CoA + H(+). It participates in aromatic compound metabolism; melatonin biosynthesis; melatonin from serotonin: step 1/2. Its activity is regulated as follows. Inhibited by long-chain acyl-CoA thioesters, oleoyl-CoA (an analog of acetyl-CoA) and tyrosol (an analog of tyramine). Catalyzes N-acetylation of tryptamine, tyramine, dopamine, serotonin and octopamine. In astrocytes, regulates sleep homeostasis by limiting the accumulation of serotonin and dopamine in the brain upon sleep deprivation. Is not essential for sclerotization. The protein is Arylalkylamine N-acetyltransferase 1 of Drosophila melanogaster (Fruit fly).